The primary structure comprises 430 residues: Resistance to inhibitors of cholinesterase protein 19 (430 aa).

One can recognise an AH domain in the interval 56–260 (ASDNELDTCL…TSRAFETLAE (205 aa)). The segment at 279-342 (GTKPERERKS…SPLIEDVDDE (64 aa)) is disordered. A compositionally biased stretch (basic and acidic residues) spans 281 to 294 (KPERERKSEKEESA).

As to quaternary structure, interacts with the GTPase activator protein tbc-8; the interaction is direct and may be required for the activation of rab-2 and dense vesicle maturation in cholinergic motoneurons. Interacts with rund-1. In terms of tissue distribution, expressed in all neurons. Highly expressed in m2 pharyngeal neurons and some pharyngeal interneurons. Also expressed in the excretory canal and the gland cells located just below the nerve ring in the head.

The protein localises to the cytoplasm. It is found in the cytoplasmic vesicle membrane. In terms of biological role, may be involved in neurotransmitter secretion. In association with the GTPase activator protein tbc-8 activates rab-2 during dense core vesicle maturation in cholinergic motoneurons. In Caenorhabditis elegans, this protein is Resistance to inhibitors of cholinesterase protein 19.